The following is a 165-amino-acid chain: Phosphopantetheine adenylyltransferase (165 aa).

S10 contacts substrate. ATP-binding positions include 10–11 (SF) and H18. Residues K42, S79, and R93 each coordinate substrate. ATP contacts are provided by residues 94–96 (GLR), E104, and 129–135 (VRPITAT).

It belongs to the bacterial CoaD family. Homohexamer. Requires Mg(2+) as cofactor.

It localises to the cytoplasm. The catalysed reaction is (R)-4'-phosphopantetheine + ATP + H(+) = 3'-dephospho-CoA + diphosphate. It functions in the pathway cofactor biosynthesis; coenzyme A biosynthesis; CoA from (R)-pantothenate: step 4/5. In terms of biological role, reversibly transfers an adenylyl group from ATP to 4'-phosphopantetheine, yielding dephospho-CoA (dPCoA) and pyrophosphate. The sequence is that of Phosphopantetheine adenylyltransferase from Bradyrhizobium diazoefficiens (strain JCM 10833 / BCRC 13528 / IAM 13628 / NBRC 14792 / USDA 110).